The sequence spans 620 residues: MKPAKQTTASLAFLAMGIVYGDIGTSPLYAFKEVFFSHHPLAINPDNVLGILSLVFWAFVLIVSIKYLLLVTRADQNGEGGILTLSAIAQQNAPKPWRRIAMLLGILATGFFFGEAVITPAMSVLSAVEGIAVAQPDLAPYVLPIAMMIIVALFAVQAMGTERIGRFFAPVMLLWFLVLALLGAHAIWHAPQVLRALNPAYAVHFVLLHGQHTLFILGLVVLSVTGVEALYADMGHFGIKPIRIAWFALVMPSLLLNYFGQGAYLLTLSAPTGSTFFSLAPKAWLWPLILLATFATVIASQAVISGIFSLARQAINYGYLPPMKIAHTSEHSQGQIYVPAANMLLFVAVIFVMLRFRSSANLAAAYGIAVTAIMMISSLLLVLVARYQWQWRWPRVVTIGIAFIGMDTLLLASTSTKLMEGGWLPLLLGCVVFIVMYIWQQQRQRLLEIAGNELSVSAMIQSLEEESFQRAAGTAVYLSRSLNHVPRSLLHNIKYNKTLHERNVLMTFQYEAVPRVHPCRRAEIEQVSASFWQVVIHIGYQEEPDMAQVMHCCGLKGLYLHPNETLFLLSSERLKVQKLGMWHDLKVWFFIQMSKHALRTSERLNIPPDRLIEMGVYREM.

The next 12 membrane-spanning stretches (helical) occupy residues L11 to F31, I51 to V71, I100 to P120, L138 to A158, F167 to I187, A202 to L222, W246 to L266, L288 to F308, G334 to L354, A364 to V384, V396 to T416, and L418 to I438.

It belongs to the HAK/KUP transporter (TC 2.A.72) family.

It is found in the cell inner membrane. It catalyses the reaction K(+)(in) + H(+)(in) = K(+)(out) + H(+)(out). In terms of biological role, transport of potassium into the cell. Likely operates as a K(+):H(+) symporter. The chain is Probable potassium transport system protein Kup from Vibrio cholerae serotype O1 (strain ATCC 39541 / Classical Ogawa 395 / O395).